The chain runs to 497 residues: MTKYVLALDQGTTSSRAILFSREGDIIQISQKEFTQIYPQPGWVEHNANEIFDTESWGMRDCLKQAGIDGSQVVAAGITNQRETTVVWDKASGAPVYNAIVWQDRRTAGFCDELKARGLADTFRQKTGLVLDAYFSGTKVRWILENVPGARAKAEKGELLFGTIDTWLIWNLTKGKVHATDESNASRTLLFNINTGQWDDELLGILGVPRSMLPTVTRSSEVVGEIHPEFLGKAIPIAGNAGDQQAATYGNACLKPGMAKNTYGTGCFMLMNTGKEVHASKNNLLTTMAWATPSGRYFALEGSVFIAGAVVQWLRDGLGIIKDAPEVEQLALSVPDNGGVYLVPAFAGLGAPHWDQYARGTMVGITRGSTKAHIARAALESIALQTLDIMDCMQKDAGIKLAALRADGGATRNNLLMQFQADVLGVPVERPKVTETTALGAAYLAGLAVGFWKSEEEIEAMWQLDRRFEPNMSAETREKLVYDWQRAVERAKAWAQE.

Thr-12 is an ADP binding site. ATP is bound by residues Thr-12, Thr-13, and Ser-14. Thr-12 is a sn-glycerol 3-phosphate binding site. Arg-16 is an ADP binding site. Positions 82, 83, 134, and 243 each coordinate sn-glycerol 3-phosphate. 5 residues coordinate glycerol: Arg-82, Glu-83, Tyr-134, Asp-243, and Gln-244. The ADP site is built by Thr-265 and Gly-308. 4 residues coordinate ATP: Thr-265, Gly-308, Gln-312, and Gly-409. ADP is bound by residues Gly-409 and Asn-413.

It belongs to the FGGY kinase family.

It catalyses the reaction glycerol + ATP = sn-glycerol 3-phosphate + ADP + H(+). Its pathway is polyol metabolism; glycerol degradation via glycerol kinase pathway; sn-glycerol 3-phosphate from glycerol: step 1/1. With respect to regulation, inhibited by fructose 1,6-bisphosphate (FBP). Functionally, key enzyme in the regulation of glycerol uptake and metabolism. Catalyzes the phosphorylation of glycerol to yield sn-glycerol 3-phosphate. This is Glycerol kinase from Nitratidesulfovibrio vulgaris (strain DSM 19637 / Miyazaki F) (Desulfovibrio vulgaris).